The chain runs to 43 residues: VVSCADITALAARQGLFTSDQDLYTDSRMGQLNVLTGTQGEIR.

Belongs to the peroxidase family. Classical plant (class III) peroxidase subfamily. Requires Ca(2+) as cofactor. The cofactor is heme b.

It carries out the reaction 2 a phenolic donor + H2O2 = 2 a phenolic radical donor + 2 H2O. Removal of H(2)O(2), oxidation of toxic reductants, biosynthesis and degradation of lignin, suberization, auxin catabolism, response to environmental stresses such as wounding, pathogen attack and oxidative stress. These functions might be dependent on each isozyme/isoform in each plant tissue. This is Peroxidase from Cynara cardunculus var. scolymus (Globe artichoke).